Reading from the N-terminus, the 305-residue chain is Ribosomal RNA small subunit methyltransferase H (305 aa).

Residues 33 to 35 (GGH), Asp-52, Asp-97, and Gln-104 contribute to the S-adenosyl-L-methionine site.

The protein belongs to the methyltransferase superfamily. RsmH family.

Its subcellular location is the cytoplasm. It carries out the reaction cytidine(1402) in 16S rRNA + S-adenosyl-L-methionine = N(4)-methylcytidine(1402) in 16S rRNA + S-adenosyl-L-homocysteine + H(+). Specifically methylates the N4 position of cytidine in position 1402 (C1402) of 16S rRNA. The chain is Ribosomal RNA small subunit methyltransferase H from Campylobacter lari (strain RM2100 / D67 / ATCC BAA-1060).